The chain runs to 726 residues: uncharacterized protein (726 aa).

Positions 10 to 135 constitute a Thioredoxin domain; the sequence is MRISWVVAFI…LLDFVETHLN (126 aa). Disordered stretches follow at residues 133–153 and 227–280; these read HLNPDTDPDIPSDEDVLTDED and VTSV…NPTG. The span at 138–153 shows a compositional bias: acidic residues; the sequence is TDPDIPSDEDVLTDED. The chain crosses the membrane as a helical span at residues 675–695; that stretch reads IRVLYMVLGIVTVGILVWYFS. Serine 708 is subject to Phosphoserine.

It localises to the membrane. This is an uncharacterized protein from Schizosaccharomyces pombe (strain 972 / ATCC 24843) (Fission yeast).